Reading from the N-terminus, the 245-residue chain is Glutathione S-transferase T1 (245 aa).

The GST N-terminal domain occupies 2–83 (MKLKVYADRM…YLSSAFPSVA (82 aa)). Glutathione contacts are provided by residues 12 to 13 (SQ), 41 to 42 (QL), 54 to 55 (KV), and 67 to 68 (ES). Positions 90 to 233 (DLSKRAKIHS…KEGFQKRREM (144 aa)) constitute a GST C-terminal domain. Positions 243–245 (SKI) match the Microbody targeting signal motif.

Belongs to the GST superfamily. Theta family.

The protein localises to the nucleus. It localises to the peroxisome. It catalyses the reaction RX + glutathione = an S-substituted glutathione + a halide anion + H(+). Functionally, in vitro, possesses glutathione S-transferase activity toward 1-chloro-2,4-dinitrobenzene (CDNB) and p-nitrobenzyl chloride (pNBC), and glutathione peroxidase activity toward cumene hydroperoxide and linoleic acid-13-hydroperoxide. May be involved in the conjugation of reduced glutathione to a wide number of exogenous and endogenous hydrophobic electrophiles and have a detoxification role against certain herbicides. The protein is Glutathione S-transferase T1 (GSTT1) of Arabidopsis thaliana (Mouse-ear cress).